A 468-amino-acid polypeptide reads, in one-letter code: Probable xyloglucan galactosyltransferase GT13 (468 aa).

Over 1–18 (MDKFNPKKEKTVKKRALK) the chain is Cytoplasmic. A helical; Signal-anchor for type II membrane protein membrane pass occupies residues 19–35 (VLTEISPTPLFSMLFLL). Over 36 to 468 (HISQIATYLS…RVSLFKMTRI (433 aa)) the chain is Lumenal. 5 N-linked (GlcNAc...) asparagine glycosylation sites follow: asparagine 53, asparagine 116, asparagine 153, asparagine 240, and asparagine 412.

It belongs to the glycosyltransferase 47 family. Expressed in roots, hypocotyls, cotyledons, leaves, stems, petals and carpels.

The protein localises to the golgi apparatus membrane. Its function is as follows. Functions in xyloglucan synthesis by adding side chains to the xylosylated glucan backbone. Involved in the galactosylation of hemicellulose xyloglucan. The chain is Probable xyloglucan galactosyltransferase GT13 from Arabidopsis thaliana (Mouse-ear cress).